The following is a 426-amino-acid chain: Adenylosuccinate synthetase (426 aa).

Residues 12 to 18 and 40 to 42 contribute to the GTP site; these read GDEGKGK and GHT. The active-site Proton acceptor is aspartate 13. The Mg(2+) site is built by aspartate 13 and glycine 40. IMP contacts are provided by residues 13 to 16, 38 to 41, threonine 131, arginine 145, glutamine 226, threonine 241, and arginine 305; these read DEGK and NAGH. The active-site Proton donor is histidine 41. Residue 301-307 coordinates substrate; the sequence is ATTGRKR. Residues arginine 307, 333 to 335, and 415 to 417 each bind GTP; these read KLD and SVG.

It belongs to the adenylosuccinate synthetase family. As to quaternary structure, homodimer. Mg(2+) serves as cofactor.

The protein localises to the cytoplasm. It carries out the reaction IMP + L-aspartate + GTP = N(6)-(1,2-dicarboxyethyl)-AMP + GDP + phosphate + 2 H(+). It participates in purine metabolism; AMP biosynthesis via de novo pathway; AMP from IMP: step 1/2. Its function is as follows. Plays an important role in the de novo pathway of purine nucleotide biosynthesis. Catalyzes the first committed step in the biosynthesis of AMP from IMP. In Nitratidesulfovibrio vulgaris (strain ATCC 29579 / DSM 644 / CCUG 34227 / NCIMB 8303 / VKM B-1760 / Hildenborough) (Desulfovibrio vulgaris), this protein is Adenylosuccinate synthetase.